A 138-amino-acid chain; its full sequence is Acidic phospholipase A2 1 (138 aa).

The signal sequence occupies residues 1-16 (MRTLWIMAVLLVGVEG). Disulfide bonds link Cys-42-Cys-131, Cys-44-Cys-60, Cys-59-Cys-111, Cys-65-Cys-138, Cys-66-Cys-104, Cys-73-Cys-97, and Cys-91-Cys-102. Ca(2+) is bound by residues Phe-43, Gly-45, and Gly-47. Residue His-63 is part of the active site. Asp-64 contributes to the Ca(2+) binding site. Asp-105 is a catalytic residue.

It belongs to the phospholipase A2 family. Group II subfamily. D49 sub-subfamily. The cofactor is Ca(2+). Expressed by the venom gland.

The protein resides in the secreted. The catalysed reaction is a 1,2-diacyl-sn-glycero-3-phosphocholine + H2O = a 1-acyl-sn-glycero-3-phosphocholine + a fatty acid + H(+). Its function is as follows. Snake venom phospholipase A2 (PLA2) that has high lipolytic activity. PLA2 catalyzes the calcium-dependent hydrolysis of the 2-acyl groups in 3-sn-phosphoglycerides. The chain is Acidic phospholipase A2 1 from Craspedocephalus gramineus (Bamboo pit viper).